We begin with the raw amino-acid sequence, 96 residues long: Large ribosomal subunit protein bL28 (96 aa).

Positions 1–23 are disordered; that stretch reads MSRVCELSGKAPMTGNTVSHANN.

This sequence belongs to the bacterial ribosomal protein bL28 family.

This chain is Large ribosomal subunit protein bL28, found in Cereibacter sphaeroides (strain ATCC 17025 / ATH 2.4.3) (Rhodobacter sphaeroides).